The following is a 316-amino-acid chain: Ribose-phosphate pyrophosphokinase (316 aa).

Residues 42 to 44 (DGE) and 101 to 102 (RQ) contribute to the ATP site. Positions 135 and 174 each coordinate Mg(2+). Residue Lys197 is part of the active site. Residues Arg199, Asp223, and 227–231 (DTAGT) contribute to the D-ribose 5-phosphate site.

The protein belongs to the ribose-phosphate pyrophosphokinase family. Class I subfamily. In terms of assembly, homohexamer. The cofactor is Mg(2+).

It is found in the cytoplasm. The catalysed reaction is D-ribose 5-phosphate + ATP = 5-phospho-alpha-D-ribose 1-diphosphate + AMP + H(+). It participates in metabolic intermediate biosynthesis; 5-phospho-alpha-D-ribose 1-diphosphate biosynthesis; 5-phospho-alpha-D-ribose 1-diphosphate from D-ribose 5-phosphate (route I): step 1/1. Its function is as follows. Involved in the biosynthesis of the central metabolite phospho-alpha-D-ribosyl-1-pyrophosphate (PRPP) via the transfer of pyrophosphoryl group from ATP to 1-hydroxyl of ribose-5-phosphate (Rib-5-P). The chain is Ribose-phosphate pyrophosphokinase from Halalkalibacterium halodurans (strain ATCC BAA-125 / DSM 18197 / FERM 7344 / JCM 9153 / C-125) (Bacillus halodurans).